The primary structure comprises 247 residues: Leucyl/phenylalanyl-tRNA--protein transferase (247 aa).

This sequence belongs to the L/F-transferase family.

It is found in the cytoplasm. The enzyme catalyses N-terminal L-lysyl-[protein] + L-leucyl-tRNA(Leu) = N-terminal L-leucyl-L-lysyl-[protein] + tRNA(Leu) + H(+). The catalysed reaction is N-terminal L-arginyl-[protein] + L-leucyl-tRNA(Leu) = N-terminal L-leucyl-L-arginyl-[protein] + tRNA(Leu) + H(+). It catalyses the reaction L-phenylalanyl-tRNA(Phe) + an N-terminal L-alpha-aminoacyl-[protein] = an N-terminal L-phenylalanyl-L-alpha-aminoacyl-[protein] + tRNA(Phe). In terms of biological role, functions in the N-end rule pathway of protein degradation where it conjugates Leu, Phe and, less efficiently, Met from aminoacyl-tRNAs to the N-termini of proteins containing an N-terminal arginine or lysine. This Solidesulfovibrio magneticus (strain ATCC 700980 / DSM 13731 / RS-1) (Desulfovibrio magneticus) protein is Leucyl/phenylalanyl-tRNA--protein transferase.